We begin with the raw amino-acid sequence, 108 residues long: AKDLLKADDIKKALDAVKAEGSFNHKKFFALVGLKAMSANDVKKVFKAIDADASGFIEEEELKFVLKSFAADGRDLTDAETKAFLKAADKDGDGKIGIDEFETLVHEA.

N-acetylalanine is present on Ala1. EF-hand domains are found at residues 37 to 72 (MSAN…FAAD) and 76 to 108 (LTDA…VHEA). Residues Asp50, Asp52, Ser54, Phe56, Glu58, Glu61, Asp89, Asp91, Asp93, Lys95, and Glu100 each contribute to the Ca(2+) site.

This sequence belongs to the parvalbumin family.

Functionally, in muscle, parvalbumin is thought to be involved in relaxation after contraction. It binds two calcium ions. This chain is Parvalbumin alpha, found in Esox lucius (Northern pike).